The sequence spans 1429 residues: Inactive rhomboid protein 1 (1429 aa).

Disordered stretches follow at residues 1–36 (MSSN…STRR), 560–579 (GNED…PDRP), and 740–766 (TSAL…QPGA). Over 1-843 (MSSNGSDLGH…RPFFTYWINT (843 aa)) the chain is Cytoplasmic. Low complexity predominate over residues 22 to 33 (SVHSSMRGSMSS). Composition is skewed to polar residues over residues 564-573 (AGQSNGTNGN) and 740-763 (TSAL…SSHQ). Residues 844–864 (VQVVVLILSIICYGIAPIGIG) traverse the membrane as a helical segment. Residues 865–1099 (SEQKTGQVLV…PDQLYRLLTS (235 aa)) lie on the Lumenal side of the membrane. A helical membrane pass occupies residues 1100–1120 (LCMHAGILHLAITLIFQHLFL). Residues 1121-1131 (ADLERLIGTVR) are Cytoplasmic-facing. Residues 1132-1152 (TAIVYIMSGFAGNLTSAILVP) traverse the membrane as a helical segment. Over 1153–1156 (HRPE) the chain is Lumenal. Residues 1157–1177 (VGPSASLSGVVASLIALLVWM) traverse the membrane as a helical segment. The Cytoplasmic portion of the chain corresponds to 1178–1186 (HWKYLHKPH). Residues 1187 to 1207 (IALFKLLLLCSVLVGIGTLPY) form a helical membrane-spanning segment. Topologically, residues 1208 to 1210 (QLN) are lumenal. Residues 1211–1231 (FLGLLAGVICGCLLTMSLVPF) form a helical membrane-spanning segment. The Cytoplasmic portion of the chain corresponds to 1232-1245 (TTFSKYGRKKKINL). A helical transmembrane segment spans residues 1246–1266 (IWTCVLFHVVVYTAMIVTFYI). Topologically, residues 1267–1429 (HPSEFHSISF…INNNTEFNVL (163 aa)) are lumenal.

The protein belongs to the peptidase S54 family. Specifically expressed in the nervous system and in brain.

It is found in the endoplasmic reticulum membrane. In terms of biological role, rhomboid protease-like protein which has no protease activity but regulates the secretion of several ligands of the epidermal growth factor receptor. Indirectly activates the epidermal growth factor receptor signaling pathway and may thereby regulate sleep, cell survival, proliferation and migration. In Drosophila melanogaster (Fruit fly), this protein is Inactive rhomboid protein 1 (rho-5).